Reading from the N-terminus, the 339-residue chain is HTH-type transcriptional regulator PtxS (339 aa).

An HTH lacI-type domain is found at 12 to 67 (VTISEVARVAGVSKATVSRYIGGDRQLLAEATAKRLEEVIERLGYRPNQMARGLKR). Positions 14–33 (ISEVARVAGVSKATVSRYIG) form a DNA-binding region, H-T-H motif.

As to quaternary structure, homodimer in solution.

With respect to regulation, 2-ketogluconate acts as a molecular effector and causes dissociation of PtxS from its target promoter. Its function is as follows. Negatively regulates glucose metabolism by binding directly to the promoter region of the kgu and gad operons. It also negatively regulates its own synthesis. This is HTH-type transcriptional regulator PtxS from Pseudomonas putida (strain ATCC 47054 / DSM 6125 / CFBP 8728 / NCIMB 11950 / KT2440).